A 453-amino-acid polypeptide reads, in one-letter code: Na(+)/H(+) antiporter NhaA (453 aa).

11 helical membrane passes run Phe27–Ile47, Leu78–Ile98, Ile114–Phe134, Gly143–Gly163, Ile172–Phe192, Gly201–Ala221, Ser222–Val242, Pro316–Ala336, Phe346–Thr366, Trp385–Val405, and Ile421–Tyr441.

It belongs to the NhaA Na(+)/H(+) (TC 2.A.33) antiporter family.

The protein resides in the cell inner membrane. It catalyses the reaction Na(+)(in) + 2 H(+)(out) = Na(+)(out) + 2 H(+)(in). Functionally, na(+)/H(+) antiporter that extrudes sodium in exchange for external protons. The chain is Na(+)/H(+) antiporter NhaA from Bartonella tribocorum (strain CIP 105476 / IBS 506).